A 412-amino-acid polypeptide reads, in one-letter code: Class E basic helix-loop-helix protein 40 (412 aa).

The interval 1–21 (MERIPSAQPPPTCLPKAPGLE) is disordered. The interval 1–139 (MERIPSAQPP…LSGRNVEAGQ (139 aa)) is essential for interaction with BMAL1, E-box binding and repressor activity against the CLOCK-BMAL1 heterodimer. The 56-residue stretch at 52 to 107 (TYKLPHRLIEKKRRDRINECIAQLKDLLPEHLKLTTLGHLEKAVVLELTLKHVKAL) folds into the bHLH domain. The segment at 75–79 (LKDLL) is necessary for interaction with RXRA and repressor activity against RXRA. Residues 142–175 (FCSGFQTCAREVLQYLAKHENTRDLKSSQLVTHL) enclose the Orange domain. Lys-159 participates in a covalent cross-link: Glycyl lysine isopeptide (Lys-Gly) (interchain with G-Cter in SUMO1, SUMO2 and SUMO3). Lys-167 participates in a covalent cross-link: Glycyl lysine isopeptide (Lys-Gly) (interchain with G-Cter in SUMO2). 2 disordered regions span residues 182-257 (LLQG…LRVE) and 279-298 (KQES…SDDE). Ser-235 is modified (phosphoserine). Positions 248–257 (ESEKSELRVE) are enriched in basic and acidic residues. Residue Lys-279 forms a Glycyl lysine isopeptide (Lys-Gly) (interchain with G-Cter in SUMO1); alternate linkage. Lys-279 is covalently cross-linked (Glycyl lysine isopeptide (Lys-Gly) (interchain with G-Cter in SUMO1, SUMO2 and SUMO3); alternate). Lys-279 is covalently cross-linked (Glycyl lysine isopeptide (Lys-Gly) (interchain with G-Cter in SUMO2); alternate). Lys-288 participates in a covalent cross-link: Glycyl lysine isopeptide (Lys-Gly) (interchain with G-Cter in SUMO2). Ser-383 is modified (phosphoserine).

In terms of assembly, homodimer. Heterodimer with BHLHE41/DEC2. Interacts with TCF3/E47. Interacts with ubiquitin-conjugating enzyme UBE2I/UBC9. Interacts with HDAC1, SUMO1, RXRA and BMAL1. Post-translationally, ubiquitinated; which may lead to proteasomal degradation. Sumoylation inhibits its ubiquitination and promotes its negative regulation of the CLOCK-BMAL1 heterodimer transcriptional activator activity.

Its subcellular location is the cytoplasm. It localises to the nucleus. In terms of biological role, transcriptional repressor involved in the regulation of the circadian rhythm by negatively regulating the activity of the clock genes and clock-controlled genes. Acts as the negative limb of a novel autoregulatory feedback loop (DEC loop) which differs from the one formed by the PER and CRY transcriptional repressors (PER/CRY loop). Both these loops are interlocked as it represses the expression of PER1/2 and in turn is repressed by PER1/2 and CRY1/2. Represses the activity of the circadian transcriptional activator: CLOCK-BMAL1|BMAL2 heterodimer by competing for the binding to E-box elements (5'-CACGTG-3') found within the promoters of its target genes. Negatively regulates its own expression and the expression of DBP and BHLHE41/DEC2. Acts as a corepressor of RXR and the RXR-LXR heterodimers and represses the ligand-induced RXRA and NR1H3/LXRA transactivation activity. May be involved in the regulation of chondrocyte differentiation via the cAMP pathway. Represses the transcription of NR0B2 and attentuates the transactivation of NR0B2 by the CLOCK-BMAL1 complex. Drives the circadian rhythm of blood pressure through transcriptional repression of ATP1B1 in the cardiovascular system. The protein is Class E basic helix-loop-helix protein 40 (BHLHE40) of Ovis aries (Sheep).